We begin with the raw amino-acid sequence, 404 residues long: MSDSKEPRLQQLGLLEEEQLRGLGFRQTRGYKSLAGCLGHGPLVLQLLSFTLLAGLLVQVSKVPSSISQEQSRQDAIYQNLTQLKAAVGELSEKSKLQEIYQELTQLKAAVGELPEKSKLQEIYQELTRLKAAVGELPEKSKLQEIYQELTWLKAAVGELPEKSKMQEIYQELTRLKAAVGELPEKSKQQEIYQELTRLKAAVGELPEKSKQQEIYQELTRLKAAVGELPEKSKQQEIYQELTQLKAAVERLCHPCPWEWTFFQGNCYFMSNSQRNWHDSITACKEVGAQLVVIKSAEEQNFLQLQSSRSNRFTWMGLSDLNQEGTWQWVDGSPLLPSFKQYWNRGEPNNVGEEDCAEFSGNGWNDDKCNLAKFWICKKSAASCSRDEEQFLSPAPATPNPPPA.

The Cytoplasmic segment spans residues 1-37; that stretch reads MSDSKEPRLQQLGLLEEEQLRGLGFRQTRGYKSLAGC. 3 consecutive short sequence motifs (endocytosis signal) follow at residues 14 to 15, 16 to 18, and 31 to 34; these read LL, EEE, and YKSL. The helical; Signal-anchor for type II membrane protein transmembrane segment at 38–58 threads the bilayer; that stretch reads LGHGPLVLQLLSFTLLAGLLV. Residues 59–404 are Extracellular-facing; the sequence is QVSKVPSSIS…APATPNPPPA (346 aa). Residue asparagine 80 is glycosylated (N-linked (GlcNAc...) asparagine). 7 consecutive repeat copies span residues 96 to 118, 119 to 141, 142 to 164, 165 to 187, 188 to 210, 211 to 233, and 234 to 257. Residues 96 to 257 form a 7 X approximate tandem repeats region; sequence KLQEIYQELT…AVERLCHPCP (162 aa). 3 cysteine pairs are disulfide-bonded: cysteine 256–cysteine 267, cysteine 284–cysteine 377, and cysteine 356–cysteine 369. Residues 263–378 enclose the C-type lectin domain; it reads FQGNCYFMSN…CNLAKFWICK (116 aa). Residues glutamate 347, asparagine 349, valine 351, glutamate 354, asparagine 365, and aspartate 366 each contribute to the Ca(2+) site.

In terms of assembly, homotetramer. Interacts with C1QBP; the interaction is indicative for a C1q:C1QBP:CD209 signaling complex. Interacts with ICAM2 and ICAM3 by binding to mannose-like carbohydrates. Interacts (via C-type lectin domain) with CEACAM1 (via Lewis X moieties); this interaction is regulated by the glycosylation pattern of CEACAM1 on cell types and regulates contact between dendritic cells and neutrophils. As to quaternary structure, (Microbial infection) Interacts with HIV-1 and HIV-2 gp120. (Microbial infection) Interacts with ebolavirus envelope glycoproteins. In terms of assembly, (Microbial infection) Interacts with cytomegalovirus gB protein. As to quaternary structure, (Microbial infection) Interacts with HCV E2 protein. (Microbial infection) Interacts with dengue virus major envelope protein E. In terms of assembly, (Microbial infection) Interacts with measles hemagglutinin. As to quaternary structure, (Microbial infection) Interacts with herpes simplex virus 1 surface proteins. (Microbial infection) Interacts with Influenzavirus A hemagglutinin. In terms of assembly, (Microbial infection) Interacts with SARS-CoV spike glycoprotein. As to quaternary structure, (Microbial infection) Interacts with Japanese encephalitis virus E protein. (Microbial infection) Interacts with Lassa virus Glycoprotein. In terms of assembly, (Microbial infection) Interacts with marburg virus glycoprotein. As to quaternary structure, (Microbial infection) Interacts with Respiratory syncytial virus glycoprotein G. (Microbial infection) Interacts with Rift valley fever virus and uukuniemi virus envelope glycoprotein. In terms of assembly, (Microbial infection) Interacts with west-nile virus envelope glycoprotein. As to quaternary structure, (Microbial infection) Interacts with whole M.bovis cells in a Ca(2+)-dependent and independent manner; in vitro experiments suggest it interacts with CH60.1 (groL1), DnaK, GADPH (gap) and LrpG. Predominantly expressed in dendritic cells and in DC-residing tissues. Also found in placental macrophages, endothelial cells of placental vascular channels, peripheral blood mononuclear cells, and THP-1 monocytes.

The protein localises to the cell membrane. Its subcellular location is the secreted. Its function is as follows. Pathogen-recognition receptor expressed on the surface of immature dendritic cells (DCs) and involved in initiation of primary immune response. Thought to mediate the endocytosis of pathogens which are subsequently degraded in lysosomal compartments. The receptor returns to the cell membrane surface and the pathogen-derived antigens are presented to resting T-cells via MHC class II proteins to initiate the adaptive immune response. In terms of biological role, on DCs it is a high affinity receptor for ICAM2 and ICAM3 by binding to mannose-like carbohydrates. May act as a DC rolling receptor that mediates transendothelial migration of DC presursors from blood to tissues by binding endothelial ICAM2. Seems to regulate DC-induced T-cell proliferation by binding to ICAM3 on T-cells in the immunological synapse formed between DC and T-cells. Functionally, (Microbial infection) Acts as an attachment receptor for HIV-1 and HIV-2. (Microbial infection) Acts as an attachment receptor for Ebolavirus. Its function is as follows. (Microbial infection) Acts as an attachment receptor for Cytomegalovirus. In terms of biological role, (Microbial infection) Acts as an attachment receptor for HCV. Functionally, (Microbial infection) Acts as an attachment receptor for Dengue virus. (Microbial infection) Acts as an attachment receptor for Measles virus. Its function is as follows. (Microbial infection) Acts as an attachment receptor for Herpes simplex virus 1. In terms of biological role, (Microbial infection) Acts as an attachment receptor for Influenzavirus A. Functionally, (Microbial infection) Acts as an attachment receptor for SARS-CoV. (Microbial infection) Acts as an attachment receptor for Japanese encephalitis virus. Its function is as follows. (Microbial infection) Acts as an attachment receptor for Lassa virus. Acts as an attachment receptor for Marburg virusn. In terms of biological role, (Microbial infection) Acts as an attachment receptor for Respiratory syncytial virus. Functionally, (Microbial infection) Acts as an attachment receptor for Rift valley fever virus and uukuniemi virus. (Microbial infection) Acts as an attachment receptor for West-nile virus. Its function is as follows. (Microbial infection) Probably recognizes in a calcium-dependent manner high mannose N-linked oligosaccharides in a variety of bacterial pathogen antigens, including Leishmania pifanoi LPG, Lewis-x antigen in Helicobacter pylori LPS, mannose in Klebsiella pneumonae LPS, di-mannose and tri-mannose in Mycobacterium tuberculosis ManLAM and Lewis-x antigen in Schistosoma mansoni SEA. Recognition of M.tuberculosis by dendritic cells occurs partially via this molecule. The sequence is that of CD209 antigen (CD209) from Homo sapiens (Human).